Here is an 808-residue protein sequence, read N- to C-terminus: ATP-dependent 6-phosphofructokinase (808 aa).

A disordered region spans residues 1–21; it reads MSSTQAPVEPPKRRRIGVLTS. Residues 1–389 are N-terminal catalytic PFK domain 1; it reads MSSTQAPVEP…YHFAYRNTAT (389 aa). ATP is bound by residues G23, 86–87, and 116–119; these read RS and GDGS. Residue D117 participates in Mg(2+) binding. Substrate contacts are provided by residues 162–164, R199, 206–208, E263, R291, and 297–300; these read SID, MGR, and HTQR. Residue D164 is the Proton acceptor of the active site. The interdomain linker stretch occupies residues 390 to 403; the sequence is PDHPKMILPQDKRM. Residues 404-808 form a C-terminal regulatory PFK domain 2 region; it reads RIAIIHVGAP…DIDPSALTSS (405 aa). Residues R480, 537-541, R575, 582-584, E642, R668, 674-677, and R749 contribute to the beta-D-fructose 2,6-bisphosphate site; these read TISNN, QGG, and HFQQ.

It belongs to the phosphofructokinase type A (PFKA) family. ATP-dependent PFK group I subfamily. Eukaryotic two domain clade 'E' sub-subfamily. As to quaternary structure, homotetramer. Requires Mg(2+) as cofactor.

It is found in the cytoplasm. It catalyses the reaction beta-D-fructose 6-phosphate + ATP = beta-D-fructose 1,6-bisphosphate + ADP + H(+). The protein operates within carbohydrate degradation; glycolysis; D-glyceraldehyde 3-phosphate and glycerone phosphate from D-glucose: step 3/4. Allosterically activated by ADP, AMP, or fructose 2,6-bisphosphate, and allosterically inhibited by ATP or citrate. Catalyzes the phosphorylation of D-fructose 6-phosphate to fructose 1,6-bisphosphate by ATP, the first committing step of glycolysis. The chain is ATP-dependent 6-phosphofructokinase (pfkA) from Aspergillus fumigatus (strain ATCC MYA-4609 / CBS 101355 / FGSC A1100 / Af293) (Neosartorya fumigata).